The sequence spans 107 residues: Diuretic hormone 45 (107 aa).

Positions 1–44 (LYAMSPMAARYSAGAPWLYLLADMPRDSQRLVDPADLHEGRARP) are excised as a propeptide. At valine 91 the chain carries Valine amide.

As to expression, expressed in corpora cardiaca (CC), corpora allata (CA), antennal lobe (AL) and gnathal ganglion (GNG) (at protein level). Expression in AL and GNG detected in some animals, in CC and CA in few animals (at protein level).

Its subcellular location is the secreted. Functionally, regulation of fluid secretion. The sequence is that of Diuretic hormone 45 from Agrotis ipsilon (Black cutworm moth).